The sequence spans 815 residues: MNAPFTYSSPTLSVEALKHSIAYKLMFTIGKDPVVANKHEWLNATLFAVRDRLVERWLRSNRAQLSQETRQVYYLSMEFLIGRTLSNAMLSLGIYEDVQGALEAMGLNLEELIDEENDPGLGNGGLGRLAACFLDSLATLGLPGRGYGIRYDYGMFKQNIVNGSQKESPDYWLEYGNPWEFKRHNTRYKVRFGGRIQQEGKKTRWIETEEILGVAYDQIIPGYDTDATNTLRLWSAQASSEINLGKFNQGDYFAAVEDKNHSENVSRVLYPDDSTYSGRELRLRQEYFLVSSTIQDILSRHYQLHKTYDNLADKIAIHLNDTHPVLSIPEMMRLLIDEHQFSWDDAFEVCCQVFSYTNHTLMSEALETWPVDMLGKILPRHLQIIFEINDYFLKTLQEQYPNDTDLLGRASIIDESNGRRVRMAWLAVVVSHKVNGVSELHSNLMVQSLFADFAKIFPGRFTNVTNGVTPRRWLAVANPSLSAVLDEHLGRNWRTDLSLLNELQQHCDFPMVNHAVHQAKLENKKRLAEYIAQQLNVVVNPKALFDVQIKRIHEYKRQLMNVLHVITRYNRIKADPDAKWVPRVNIFGGKAASAYYMAKHIIHLINDVAKVINNDPQIGDKLKVVFIPNYSVSLAQLIIPAADLSEQISLAGTEASGTSNMKFALNGALTIGTLDGANVEMLDHVGADNIFIFGNTAEEVEELRRQGYKPREYYEKDEELHQVLTQIGSGVFSPEDPGRYRDLVDSLINFGDHYQVLADYRSYVDCQDKVDELYELQEEWTAKAMLNIANMGYFSSDRTIKEYADHIWHIDPVRL.

Lys662 carries the N6-(pyridoxal phosphate)lysine modification.

It belongs to the glycogen phosphorylase family. The cofactor is pyridoxal 5'-phosphate.

It carries out the reaction [(1-&gt;4)-alpha-D-glucosyl](n) + phosphate = [(1-&gt;4)-alpha-D-glucosyl](n-1) + alpha-D-glucose 1-phosphate. Functionally, phosphorylase is an important allosteric enzyme in carbohydrate metabolism. Enzymes from different sources differ in their regulatory mechanisms and in their natural substrates. However, all known phosphorylases share catalytic and structural properties. This chain is Glycogen phosphorylase (glgP), found in Shigella flexneri.